The sequence spans 554 residues: Suppressor of tumorigenicity 7 protein homolog (554 aa).

The next 4 membrane-spanning stretches (helical) occupy residues Cys-15–Val-35, Phe-62–Trp-82, Leu-489–Leu-509, and Leu-516–Met-536.

This sequence belongs to the ST7 family.

The protein resides in the membrane. In Gallus gallus (Chicken), this protein is Suppressor of tumorigenicity 7 protein homolog (ST7).